Here is a 164-residue protein sequence, read N- to C-terminus: Large ribosomal subunit protein uL10 (164 aa).

The protein belongs to the universal ribosomal protein uL10 family. In terms of assembly, part of the ribosomal stalk of the 50S ribosomal subunit. The N-terminus interacts with L11 and the large rRNA to form the base of the stalk. The C-terminus forms an elongated spine to which L12 dimers bind in a sequential fashion forming a multimeric L10(L12)X complex.

Forms part of the ribosomal stalk, playing a central role in the interaction of the ribosome with GTP-bound translation factors. The protein is Large ribosomal subunit protein uL10 of Aliivibrio salmonicida (strain LFI1238) (Vibrio salmonicida (strain LFI1238)).